The chain runs to 494 residues: Aspartyl/glutamyl-tRNA(Asn/Gln) amidotransferase subunit B (494 aa).

This sequence belongs to the GatB/GatE family. GatB subfamily. In terms of assembly, heterotrimer of A, B and C subunits.

It carries out the reaction L-glutamyl-tRNA(Gln) + L-glutamine + ATP + H2O = L-glutaminyl-tRNA(Gln) + L-glutamate + ADP + phosphate + H(+). The catalysed reaction is L-aspartyl-tRNA(Asn) + L-glutamine + ATP + H2O = L-asparaginyl-tRNA(Asn) + L-glutamate + ADP + phosphate + 2 H(+). In terms of biological role, allows the formation of correctly charged Asn-tRNA(Asn) or Gln-tRNA(Gln) through the transamidation of misacylated Asp-tRNA(Asn) or Glu-tRNA(Gln) in organisms which lack either or both of asparaginyl-tRNA or glutaminyl-tRNA synthetases. The reaction takes place in the presence of glutamine and ATP through an activated phospho-Asp-tRNA(Asn) or phospho-Glu-tRNA(Gln). This Rhodopseudomonas palustris (strain BisA53) protein is Aspartyl/glutamyl-tRNA(Asn/Gln) amidotransferase subunit B.